The sequence spans 137 residues: Peptide methionine sulfoxide reductase MsrB (137 aa).

The MsrB domain maps to 7-129 (VDDLKENLSE…NSASLSFTDE (123 aa)). Zn(2+)-binding residues include C46, C49, C95, and C98. The active-site Nucleophile is the C118.

This sequence belongs to the MsrB Met sulfoxide reductase family. Zn(2+) serves as cofactor.

The enzyme catalyses L-methionyl-[protein] + [thioredoxin]-disulfide + H2O = L-methionyl-(R)-S-oxide-[protein] + [thioredoxin]-dithiol. The chain is Peptide methionine sulfoxide reductase MsrB from Escherichia fergusonii (strain ATCC 35469 / DSM 13698 / CCUG 18766 / IAM 14443 / JCM 21226 / LMG 7866 / NBRC 102419 / NCTC 12128 / CDC 0568-73).